The chain runs to 94 residues: Acylphosphatase (94 aa).

Positions 8–94 (TVHVIVKGKV…EKRYKHFAQL (87 aa)) constitute an Acylphosphatase-like domain. Catalysis depends on residues Arg-23 and Asn-41.

Belongs to the acylphosphatase family.

The enzyme catalyses an acyl phosphate + H2O = a carboxylate + phosphate + H(+). In Bordetella parapertussis (strain 12822 / ATCC BAA-587 / NCTC 13253), this protein is Acylphosphatase (acyP).